A 307-amino-acid polypeptide reads, in one-letter code: Ribosomal RNA small subunit methyltransferase H (307 aa).

Residues 32 to 34 (AGH), Asp-51, Ile-82, Asp-99, and Gln-106 each bind S-adenosyl-L-methionine.

The protein belongs to the methyltransferase superfamily. RsmH family.

It localises to the cytoplasm. The catalysed reaction is cytidine(1402) in 16S rRNA + S-adenosyl-L-methionine = N(4)-methylcytidine(1402) in 16S rRNA + S-adenosyl-L-homocysteine + H(+). Its function is as follows. Specifically methylates the N4 position of cytidine in position 1402 (C1402) of 16S rRNA. This Campylobacter concisus (strain 13826) protein is Ribosomal RNA small subunit methyltransferase H.